The following is a 120-amino-acid chain: Glycine cleavage system H protein (120 aa).

Positions 20–102 (DGTVGISDHA…YEGGWLFKLD (83 aa)) constitute a Lipoyl-binding domain. Lysine 61 bears the N6-lipoyllysine mark.

Belongs to the GcvH family. The glycine cleavage system is composed of four proteins: P, T, L and H. (R)-lipoate serves as cofactor.

The glycine cleavage system catalyzes the degradation of glycine. The H protein shuttles the methylamine group of glycine from the P protein to the T protein. This chain is Glycine cleavage system H protein, found in Deinococcus radiodurans (strain ATCC 13939 / DSM 20539 / JCM 16871 / CCUG 27074 / LMG 4051 / NBRC 15346 / NCIMB 9279 / VKM B-1422 / R1).